Reading from the N-terminus, the 763-residue chain is Fibroblast growth factor receptor (763 aa).

An N-terminal signal peptide occupies residues Met-1 to Ala-27. Over Ser-28–Asn-291 the chain is Extracellular. Residues Phe-34 to Tyr-74 form a disordered region. Ig-like C2-type domains lie at Pro-73–Asp-164 and Pro-173–Ser-270. A disulfide bridge connects residues Cys-98 and Cys-148. Residues Asn-158, Asn-182, Asn-220, Asn-230, Asn-243, and Asn-288 are each glycosylated (N-linked (GlcNAc...) asparagine). A disulfide bond links Cys-195 and Cys-254. Residues Ile-292–Val-312 form a helical membrane-spanning segment. Over Leu-313 to Ala-763 the chain is Cytoplasmic. The region spanning Ile-382–Leu-672 is the Protein kinase domain. ATP is bound by residues Leu-388–Val-396 and Lys-417. Asp-537 (proton acceptor) is an active-site residue. Tyr-568 is subject to Phosphotyrosine; by autocatalysis. Residues Tyr-691 to Ser-711 show a composition bias toward acidic residues. Positions Tyr-691 to Ala-742 are disordered.

This sequence belongs to the protein kinase superfamily. Tyr protein kinase family. Fibroblast growth factor receptor subfamily.

Its subcellular location is the membrane. It carries out the reaction L-tyrosyl-[protein] + ATP = O-phospho-L-tyrosyl-[protein] + ADP + H(+). Receptor for basic fibroblast growth factor. The sequence is that of Fibroblast growth factor receptor (FGFR) from Halocynthia roretzi (Sea squirt).